Consider the following 506-residue polypeptide: Anaerobic nitric oxide reductase transcription regulator NorR (506 aa).

At D57 the chain carries 4-aspartylphosphate. Residues 187–416 (MIGLSPAMTQ…LEHAIHRAVV (230 aa)) form the Sigma-54 factor interaction domain. Residues 215–222 (GETGTGKE) and 278–287 (ADNGTLFLDE) contribute to the ATP site. Positions 481-500 (WAASARALETDVANLHRLAK) form a DNA-binding region, H-T-H motif.

It participates in nitrogen metabolism; nitric oxide reduction. Functionally, required for the expression of anaerobic nitric oxide (NO) reductase, acts as a transcriptional activator for at least the norVW operon. Activation also requires sigma-54. The protein is Anaerobic nitric oxide reductase transcription regulator NorR of Salmonella newport (strain SL254).